Here is a 131-residue protein sequence, read N- to C-terminus: Rhodopsin (131 aa).

Over 1–16 (CGIDYYTRAPGYNNES) the chain is Extracellular. N-linked (GlcNAc...) asparagine glycosylation occurs at Asn-14. The helical transmembrane segment at 17–38 (FVIYMFIVHFLIPLFIISFCYG) threads the bilayer. Residues 39 to 66 (NLLCAVKAAAAAQEESETTQRAEREVTR) lie on the Cytoplasmic side of the membrane. The helical transmembrane segment at 67 to 88 (MVIMMVISYLVSWVPYASVAWY) threads the bilayer. Residues 89–100 (IFSNQGSEFGPV) lie on the Extracellular side of the membrane. Residues 101–122 (FMTIPAFFAKSSALYNPLIYVL) traverse the membrane as a helical segment. The residue at position 110 (Lys-110) is an N6-(retinylidene)lysine. The Cytoplasmic portion of the chain corresponds to 123–131 (MNKQFRHCM).

This sequence belongs to the G-protein coupled receptor 1 family. Opsin subfamily. Post-translationally, phosphorylated on some or all of the serine and threonine residues present in the C-terminal region. Contains one covalently linked retinal chromophore.

The protein resides in the membrane. It is found in the cell projection. The protein localises to the cilium. It localises to the photoreceptor outer segment. Photoreceptor required for image-forming vision at low light intensity. While most salt water fish species use retinal as chromophore, most freshwater fish use 3-dehydroretinal, or a mixture of retinal and 3-dehydroretinal. Light-induced isomerization of 11-cis to all-trans retinal triggers a conformational change that activates signaling via G-proteins. Subsequent receptor phosphorylation mediates displacement of the bound G-protein alpha subunit by arrestin and terminates signaling. In Coregonus autumnalis (Arctic cisco), this protein is Rhodopsin (rho).